The chain runs to 458 residues: MTKEMTENQRLCPHEQEDADCSSESVKFDARSMTASLPHSTKNGPSLQEKLKSFKAALIALYLLVFAVLIPVVGIVTAQLLNWEMKNCLVCSLNTSDTSQGPMEKENTSKVEMRFTIIMEHMKDMEERIESISNSKADLIDTERFQNFSMATDQRLNDILLQLNSLISSVQEHGNSLDAISKSLQSLNMTLLDVQLHTETLNVRVRESTAKQQEDISKLEERVYKVSAEVQSVKEEQAHVEQEVKQEVRVLNNITNDLRLKDWEHSQTLKNITFIQGPPGPQGEKGDRGLTGQTGPPGAPGIRGIPGVKGDRGQIGFPGGRGNPGAPGKPGRSGSPGPKGQKGEKGSVGGSTPLKTVRLVGGSGAHEGRVEIFHQGQWGTICDDRWDIRAGQVVCRSLGYQEVLAVHKRAHFGQGTGPIWLNEVMCFGRESSIENCKINQWGVLSCSHSEDAGVTCTS.

The Cytoplasmic segment spans residues 1–55 (MTKEMTENQRLCPHEQEDADCSSESVKFDARSMTASLPHSTKNGPSLQEKLKSFK). Residues S32 and S36 each carry the phosphoserine modification. Residues 56 to 78 (AALIALYLLVFAVLIPVVGIVTA) form a helical; Signal-anchor for type II membrane protein membrane-spanning segment. The interval 79–114 (QLLNWEMKNCLVCSLNTSDTSQGPMEKENTSKVEMR) is spacer. Over 79 to 458 (QLLNWEMKNC…SEDAGVTCTS (380 aa)) the chain is Extracellular. N-linked (GlcNAc...) asparagine glycans are attached at residues N94, N107, N147, N188, N253, and N271. Residues 209 to 259 (TAKQQEDISKLEERVYKVSAEVQSVKEEQAHVEQEVKQEVRVLNNITNDLR) are a coiled coil. Positions 272 to 357 (ITFIQGPPGP…VGGSTPLKTV (86 aa)) are disordered. The region spanning 277–350 (GPPGPQGEKG…QKGEKGSVGG (74 aa)) is the Collagen-like domain. Residues 316–325 (GFPGGRGNPG) are compositionally biased toward gly residues. A compositionally biased stretch (low complexity) spans 326–339 (APGKPGRSGSPGPK). An SRCR domain is found at 357 to 457 (VRLVGGSGAH…HSEDAGVTCT (101 aa)). 3 cysteine pairs are disulfide-bonded: C382–C446, C395–C456, and C426–C436.

In terms of assembly, homotrimer. Interacts with MYO18A.

It localises to the membrane. Functionally, membrane glycoproteins implicated in the pathologic deposition of cholesterol in arterial walls during atherogenesis. Two types of receptor subunits exist. These receptors mediate the endocytosis of a diverse group of macromolecules, including modified low density lipoproteins (LDL). This is Macrophage scavenger receptor types I and II (Msr1) from Mus musculus (Mouse).